A 258-amino-acid chain; its full sequence is Putative cysteine-rich repeat secretory protein 61 (258 aa).

The signal sequence occupies residues 1–31 (MSSSFIPKRIALVLNLAMVAIQVFFIRSVSS). Gnk2-homologous domains lie at 38 to 140 (YLYH…PTAF) and 146 to 253 (DKNK…IYPF).

Belongs to the cysteine-rich repeat secretory protein family.

It is found in the secreted. This is Putative cysteine-rich repeat secretory protein 61 (CRRSP61) from Arabidopsis thaliana (Mouse-ear cress).